The primary structure comprises 638 residues: Dihydrolipoyllysine-residue acetyltransferase component of pyruvate dehydrogenase complex (638 aa).

Lipoyl-binding domains follow at residues 2–74 and 117–191; these read SEII…IELE and SQEV…LTLR. At K40 the chain carries N6-lipoyllysine. Positions 90–117 are enriched in low complexity; it reads PAAPTQAVDEAEAPSPGASATPAPAAAS. Residues 90 to 119 form a disordered region; the sequence is PAAPTQAVDEAEAPSPGASATPAPAAASQE. K157 carries the post-translational modification N6-lipoyllysine. The segment at 201-220 is disordered; that stretch reads APAAAAAASPAPAPLAPAAA. Residues 222–296 enclose the Lipoyl-binding 3 domain; it reads PQEVKVPDIG…GTGDQILTLR (75 aa). The residue at position 262 (K262) is an N6-lipoyllysine. A compositionally biased stretch (low complexity) spans 301 to 320; that stretch reads APSGPRARGSPGQAAAAPGA. A disordered region spans residues 301-336; that stretch reads APSGPRARGSPGQAAAAPGAAPAPAPVGAPSRNGAK. The Peripheral subunit-binding (PSBD) domain maps to 338–375; sequence HAGPAVRQLAREFGVELAAINSTGPRGRILKEDVQAYV. The catalytic stretch occupies residues 382–638; that stretch reads AKEAPAAGAA…LLADIRAILL (257 aa). Residue H611 is part of the active site.

The protein belongs to the 2-oxoacid dehydrogenase family. As to quaternary structure, forms a 24-polypeptide structural core with octahedral symmetry. The cofactor is (R)-lipoate.

The catalysed reaction is N(6)-[(R)-dihydrolipoyl]-L-lysyl-[protein] + acetyl-CoA = N(6)-[(R)-S(8)-acetyldihydrolipoyl]-L-lysyl-[protein] + CoA. The pyruvate dehydrogenase complex catalyzes the overall conversion of pyruvate to acetyl-CoA and CO(2). It contains multiple copies of three enzymatic components: pyruvate dehydrogenase (E1), dihydrolipoamide acetyltransferase (E2) and lipoamide dehydrogenase (E3). This chain is Dihydrolipoyllysine-residue acetyltransferase component of pyruvate dehydrogenase complex, found in Azotobacter vinelandii.